The sequence spans 156 residues: Putative pre-16S rRNA nuclease (156 aa).

Belongs to the YqgF nuclease family.

The protein localises to the cytoplasm. In terms of biological role, could be a nuclease involved in processing of the 5'-end of pre-16S rRNA. This Bartonella tribocorum (strain CIP 105476 / IBS 506) protein is Putative pre-16S rRNA nuclease.